The primary structure comprises 462 residues: Glutamate--tRNA ligase (462 aa).

The 'HIGH' region signature appears at 11-21 (PSPTGFIHLGN). Basic and acidic residues predominate over residues 120–131 (KPRYDGTWRPEP). A disordered region spans residues 120 to 140 (KPRYDGTWRPEPGKTLPPIPA). Residues 243 to 247 (KMSKR) carry the 'KMSKS' region motif. K246 contributes to the ATP binding site.

This sequence belongs to the class-I aminoacyl-tRNA synthetase family. Glutamate--tRNA ligase type 1 subfamily. In terms of assembly, monomer.

It localises to the cytoplasm. It catalyses the reaction tRNA(Glu) + L-glutamate + ATP = L-glutamyl-tRNA(Glu) + AMP + diphosphate. Functionally, catalyzes the attachment of glutamate to tRNA(Glu) in a two-step reaction: glutamate is first activated by ATP to form Glu-AMP and then transferred to the acceptor end of tRNA(Glu). This Polaromonas sp. (strain JS666 / ATCC BAA-500) protein is Glutamate--tRNA ligase.